Consider the following 319-residue polypeptide: NADH-cytochrome b5 reductase 2 (319 aa).

Residues 30–46 form a helical membrane-spanning segment; it reads LAPVYLTVGLAGLGVGL. Positions 69 to 173 constitute an FAD-binding FR-type domain; the sequence is QGWVDLKLSE…KGPLPKYPWE (105 aa). 176–211 is an FAD binding site; that stretch reads KHQHICLIAGGTGITPMYQLARHIFKNPEDKTKVTL.

Belongs to the flavoprotein pyridine nucleotide cytochrome reductase family. The cofactor is FAD.

It localises to the mitochondrion outer membrane. It catalyses the reaction 2 Fe(III)-[cytochrome b5] + NADH = 2 Fe(II)-[cytochrome b5] + NAD(+) + H(+). Functionally, may mediate the reduction of outer membrane cytochrome b5. This chain is NADH-cytochrome b5 reductase 2 (mcr1), found in Aspergillus terreus (strain NIH 2624 / FGSC A1156).